A 469-amino-acid chain; its full sequence is ATP sulfurylase 4, chloroplastic (469 aa).

The transit peptide at 1–51 (MASSAAAIVSGSPFRSSPLIHNHHASRYAPGSISVVSLPRQVSRRGLSVKS) directs the protein to the chloroplast.

This sequence belongs to the sulfate adenylyltransferase family. Homotetramer. Expressed in roots and leaves.

It localises to the plastid. The protein localises to the chloroplast stroma. The enzyme catalyses sulfate + ATP + H(+) = adenosine 5'-phosphosulfate + diphosphate. Its pathway is sulfur metabolism; hydrogen sulfide biosynthesis; sulfite from sulfate: step 1/3. Its function is as follows. Sulfate adenylyltransferase. Catalyzes the first step of the sulfate assimilation pathway. The protein is ATP sulfurylase 4, chloroplastic (APS4) of Arabidopsis thaliana (Mouse-ear cress).